The chain runs to 833 residues: Leucine--tRNA ligase (833 aa).

Positions 41-52 (PYPSGAGLHVGH) match the 'HIGH' region motif. A 'KMSKS' region motif is present at residues 610 to 614 (KMSKS). An ATP-binding site is contributed by Lys-613.

The protein belongs to the class-I aminoacyl-tRNA synthetase family.

Its subcellular location is the cytoplasm. The enzyme catalyses tRNA(Leu) + L-leucine + ATP = L-leucyl-tRNA(Leu) + AMP + diphosphate. The chain is Leucine--tRNA ligase from Streptococcus pyogenes serotype M4 (strain MGAS10750).